The chain runs to 129 residues: Small ribosomal subunit protein uS11 (129 aa).

This sequence belongs to the universal ribosomal protein uS11 family. As to quaternary structure, part of the 30S ribosomal subunit. Interacts with proteins S7 and S18. Binds to IF-3.

In terms of biological role, located on the platform of the 30S subunit, it bridges several disparate RNA helices of the 16S rRNA. Forms part of the Shine-Dalgarno cleft in the 70S ribosome. The protein is Small ribosomal subunit protein uS11 of Limosilactobacillus reuteri (strain DSM 20016) (Lactobacillus reuteri).